Here is a 44-residue protein sequence, read N- to C-terminus: Large ribosomal subunit protein bL34 (44 aa).

Positions 1-26 (MKMTFQPKKRQRAKVHGFRQRMKTAG) are disordered. Over residues 7–22 (PKKRQRAKVHGFRQRM) the composition is skewed to basic residues.

It belongs to the bacterial ribosomal protein bL34 family.

This chain is Large ribosomal subunit protein bL34, found in Agathobacter rectalis (strain ATCC 33656 / DSM 3377 / JCM 17463 / KCTC 5835 / VPI 0990) (Eubacterium rectale).